The chain runs to 459 residues: D(1)-like dopamine receptor (459 aa).

At 1-23 (MAQNFSTVGDGKQMLLERDSSKR) the chain is on the extracellular side. The N-linked (GlcNAc...) asparagine glycan is linked to Asn-4. A helical transmembrane segment spans residues 24 to 49 (VLTGCFLSLLIFTTLLGNTLVCVAVT). Residues 50-60 (KFRHLRSKVTN) are Cytoplasmic-facing. Residues 61–87 (FFVISLAISDLLVAILVMPWKAATEIM) traverse the membrane as a helical segment. The Extracellular segment spans residues 88-96 (GFWPFGEFC). A disulfide bond links Cys-96 and Cys-187. The helical transmembrane segment at 97-119 (NIWVAFDIMCSTASILNLCVISV) threads the bilayer. Residues 120–138 (DRYWAISSPFRYERKMTPK) lie on the Cytoplasmic side of the membrane. The chain crosses the membrane as a helical span at residues 139–164 (VACLMISVAWTLSVLISFIPVQLNWH). Residues 165–191 (KAQTASYVELNGTYAGDLPPDNCDSSL) lie on the Extracellular side of the membrane. A helical transmembrane segment spans residues 192–216 (NRTYAISSSLISFYIPVAIMIVTYT). At 217-269 (RIYRIAQKQIRRISALERAAESAQNRHSSMGNSLSMESECSFKMSFKRETKVL) the chain is on the cytoplasmic side. Residues 270–297 (KTLSVIMGVFVCCWLPFFILNCMVPFCE) traverse the membrane as a helical segment. At 298–311 (ADDTTDFPCISSTT) the chain is on the extracellular side. Residues 312–333 (FDVFVWFGWANSSLNPIIYAFN) traverse the membrane as a helical segment. The Cytoplasmic portion of the chain corresponds to 334–459 (ADFRKAFSIL…QNGQHKSMSC (126 aa)).

This sequence belongs to the G-protein coupled receptor 1 family.

It is found in the cell membrane. Its subcellular location is the cell projection. It localises to the cilium membrane. Receptor for dopamine. This chain is D(1)-like dopamine receptor (d14), found in Takifugu rubripes (Japanese pufferfish).